Consider the following 148-residue polypeptide: Large ribosomal subunit protein bL27m (148 aa).

Residues 1 to 30 (MALAVLAWRTRTAVIALLSPPQAAALAVRY) constitute a mitochondrion transit peptide.

The protein belongs to the bacterial ribosomal protein bL27 family. As to quaternary structure, component of the mitochondrial ribosome large subunit (39S) which comprises a 16S rRNA and about 50 distinct proteins.

The protein resides in the mitochondrion. The polypeptide is Large ribosomal subunit protein bL27m (MRPL27) (Bos taurus (Bovine)).